Consider the following 216-residue polypeptide: GTP cyclohydrolase 1 (216 aa).

The Zn(2+) site is built by Cys-109, His-112, and Cys-180.

Belongs to the GTP cyclohydrolase I family. In terms of assembly, homomer.

It carries out the reaction GTP + H2O = 7,8-dihydroneopterin 3'-triphosphate + formate + H(+). Its pathway is cofactor biosynthesis; 7,8-dihydroneopterin triphosphate biosynthesis; 7,8-dihydroneopterin triphosphate from GTP: step 1/1. The polypeptide is GTP cyclohydrolase 1 (Tolumonas auensis (strain DSM 9187 / NBRC 110442 / TA 4)).